A 92-amino-acid chain; its full sequence is PqqA binding protein (92 aa).

The protein belongs to the PqqD family. In terms of assembly, monomer. Interacts with PqqE.

It participates in cofactor biosynthesis; pyrroloquinoline quinone biosynthesis. In terms of biological role, functions as a PqqA binding protein and presents PqqA to PqqE, in the pyrroloquinoline quinone (PQQ) biosynthetic pathway. This is PqqA binding protein from Xanthomonas campestris pv. campestris (strain 8004).